The chain runs to 415 residues: D-serine dehydratase (415 aa).

Lysine 68 is subject to N6-(pyridoxal phosphate)lysine. Pyridoxal 5'-phosphate is bound by residues tyrosine 204, tyrosine 211, threonine 253, glycine 279, and asparagine 280. Zn(2+) contacts are provided by histidine 385 and cysteine 387.

Belongs to the DSD1 family. Homodimer. Pyridoxal 5'-phosphate is required as a cofactor. Requires Zn(2+) as cofactor.

The protein resides in the cytoplasm. It localises to the nucleus. It catalyses the reaction D-serine = pyruvate + NH4(+). Catalyzes the conversion of D-serine to pyruvate and ammonia. May play a role in D-serine detoxification. The polypeptide is D-serine dehydratase (Schizosaccharomyces pombe (strain 972 / ATCC 24843) (Fission yeast)).